The sequence spans 266 residues: tRNA (guanine-N(1)-)-methyltransferase (266 aa).

Residues Gly113 and 137-142 (LGDYVL) each bind S-adenosyl-L-methionine.

It belongs to the RNA methyltransferase TrmD family. In terms of assembly, homodimer.

It is found in the cytoplasm. The enzyme catalyses guanosine(37) in tRNA + S-adenosyl-L-methionine = N(1)-methylguanosine(37) in tRNA + S-adenosyl-L-homocysteine + H(+). In terms of biological role, specifically methylates guanosine-37 in various tRNAs. This is tRNA (guanine-N(1)-)-methyltransferase from Paenarthrobacter aurescens (strain TC1).